Consider the following 173-residue polypeptide: Alpha-crystallin A chain (173 aa).

At Met1 the chain carries N-acetylmethionine. Positions 1–63 are required for complex formation with BFSP1 and BFSP2; the sequence is MDIAIQHPWF…RSVLDSGISE (63 aa). Gln6 carries the deamidated glutamine; partial modification. The residue at position 45 (Ser45) is a Phosphoserine. Gln50 bears the Deamidated glutamine; partial mark. One can recognise a sHSP domain in the interval 52-162; sequence VFRSVLDSGI…GHSERAIPVS (111 aa). Lys70 and Lys99 each carry N6-acetyllysine. A Zn(2+)-binding site is contributed by His100. The residue at position 101 (Asn101) is a Deamidated asparagine; partial. The Zn(2+) site is built by Glu102 and His107. Residue Ser122 is modified to Phosphoserine. Residue Asn123 is modified to Deamidated asparagine; partial. Residues 144-173 form a disordered region; it reads PKVPSGVDAGHSERAIPVSREEKPSSAPSS. Basic and acidic residues predominate over residues 153-167; the sequence is GHSERAIPVSREEKP. Zn(2+) is bound at residue His154. A glycan (O-linked (GlcNAc) serine) is linked at Ser162.

Belongs to the small heat shock protein (HSP20) family. As to quaternary structure, heteromer composed of three CRYAA and one CRYAB subunits. Inter-subunit bridging via zinc ions enhances stability, which is crucial as there is no protein turn over in the lens. Can also form homodimers and homotetramers (dimers of dimers) which serve as the building blocks of homooligomers. Within homooligomers, the zinc-binding motif is created from residues of 3 different molecules. His-100 and Glu-102 from one molecule are ligands of the zinc ion, and His-107 and His-154 residues from additional molecules complete the site with tetrahedral coordination geometry. Part of a complex required for lens intermediate filament formation composed of BFSP1, BFSP2 and CRYAA. In terms of processing, acetylation at Lys-70 may increase chaperone activity. Undergoes age-dependent proteolytical cleavage at the C-terminus.

The protein resides in the cytoplasm. Its subcellular location is the nucleus. Its function is as follows. Contributes to the transparency and refractive index of the lens. Acts as a chaperone, preventing aggregation of various proteins under a wide range of stress conditions. Required for the correct formation of lens intermediate filaments as part of a complex composed of BFSP1, BFSP2 and CRYAA. In Halichoerus grypus (Gray seal), this protein is Alpha-crystallin A chain (CRYAA).